A 185-amino-acid polypeptide reads, in one-letter code: Transcription termination/antitermination protein NusG (185 aa).

The region spanning 134-163 (VGQQVRIVEGPFATFSGEVEEVMSERNKVR) is the KOW domain.

The protein belongs to the NusG family.

Functionally, participates in transcription elongation, termination and antitermination. This chain is Transcription termination/antitermination protein NusG, found in Treponema pallidum (strain Nichols).